The following is a 1039-amino-acid chain: Translation initiation factor IF-2 (1039 aa).

Disordered regions lie at residues 39-347 (TISE…KWQE) and 400-452 (ARPP…PEKV). Residues 103-125 (RNTTSNAPEASVANNQIASSEAN) show a composition bias toward polar residues. A compositionally biased stretch (low complexity) spans 157 to 176 (PQKPAAPEAEPEAQSQAPAK). Composition is skewed to basic and acidic residues over residues 178 to 197 (AVEK…ERQP) and 226 to 243 (PILK…DQAK). Over residues 408–423 (ARSASAATAAPISSPT) the composition is skewed to low complexity. Residues 432–451 (NNRDQNRRQETEVKRERPEK) show a composition bias toward basic and acidic residues. In terms of domain architecture, tr-type G spans 533-706 (RRPPVVTIMG…LLVAEVGELS (174 aa)). The G1 stretch occupies residues 542 to 549 (GHVDHGKT). 542 to 549 (GHVDHGKT) serves as a coordination point for GTP. The segment at 567–571 (GITQH) is G2. Residues 592–595 (DTPG) form a G3 region. Residues 592–596 (DTPGH) and 646–649 (NKID) contribute to the GTP site. Residues 646–649 (NKID) are G4. Residues 682–684 (SAI) form a G5 region.

The protein belongs to the TRAFAC class translation factor GTPase superfamily. Classic translation factor GTPase family. IF-2 subfamily.

It localises to the cytoplasm. Its function is as follows. One of the essential components for the initiation of protein synthesis. Protects formylmethionyl-tRNA from spontaneous hydrolysis and promotes its binding to the 30S ribosomal subunits. Also involved in the hydrolysis of GTP during the formation of the 70S ribosomal complex. This Nostoc sp. (strain PCC 7120 / SAG 25.82 / UTEX 2576) protein is Translation initiation factor IF-2.